A 492-amino-acid polypeptide reads, in one-letter code: Cytoplasmic dynein 1 light intermediate chain 2 (492 aa).

Residue 61–68 (GEDGSGKT) participates in ATP binding. 3 disordered regions span residues 187 to 206 (PEEG…SGSD), 371 to 423 (AKQP…KNNA), and 437 to 492 (LSKK…ENEA). S194 is modified (phosphoserine). Residues 371 to 381 (AKQPATPTRAS) are compositionally biased toward polar residues. 2 positions are modified to phosphoserine: S383 and S391. R397 is modified (omega-N-methylarginine). Phosphothreonine is present on T441. Residues S443 and S446 each carry the phosphoserine modification. Polar residues predominate over residues 452-469 (VQSTAKKSGQKTVLSNVQ). Positions 471–480 (ELDRMTRKPD) are enriched in basic and acidic residues. Residues 482-492 (MVTNSSTENEA) are compositionally biased toward polar residues.

Belongs to the dynein light intermediate chain family. As to quaternary structure, homodimer. The cytoplasmic dynein 1 complex consists of two catalytic heavy chains (HCs) and a number of non-catalytic subunits presented by intermediate chains (ICs), light intermediate chains (LICs) and light chains (LCs); the composition seems to vary in respect to the IC, LIC and LC composition. The heavy chain homodimer serves as a scaffold for the probable homodimeric assembly of the respective non-catalytic subunits. The ICs and LICs bind directly to the HC dimer and the LCs assemble on the IC dimer. Interacts with DYNC1H1; DYNC1LI1 and DYNC1LI2 bind mutually exclusive to DYNC1H.

It localises to the cytoplasm. Its subcellular location is the cytoskeleton. Acts as one of several non-catalytic accessory components of the cytoplasmic dynein 1 complex that are thought to be involved in linking dynein to cargos and to adapter proteins that regulate dynein function. Cytoplasmic dynein 1 acts as a motor for the intracellular retrograde motility of vesicles and organelles along microtubules. May play a role in binding dynein to membranous organelles or chromosomes. This Pongo abelii (Sumatran orangutan) protein is Cytoplasmic dynein 1 light intermediate chain 2 (DYNC1LI2).